Consider the following 185-residue polypeptide: Ribosome-recycling factor (185 aa).

The protein belongs to the RRF family.

The protein localises to the cytoplasm. Its function is as follows. Responsible for the release of ribosomes from messenger RNA at the termination of protein biosynthesis. May increase the efficiency of translation by recycling ribosomes from one round of translation to another. The sequence is that of Ribosome-recycling factor from Aliarcobacter butzleri (strain RM4018) (Arcobacter butzleri).